A 1174-amino-acid chain; its full sequence is Tyrosine-protein phosphatase non-receptor type 21 (1174 aa).

The region spanning 23 to 308 (LVARIQLLNN…ARHKFYRLNQ (286 aa)) is the FERM domain. Over residues 396–423 (SAHSTNSLNNPQPYLQPSPMSSNPSITG) the composition is skewed to polar residues. The disordered stretch occupies residues 396–445 (SAHSTNSLNNPQPYLQPSPMSSNPSITGSDVMRPDYLPSHRHSAVIPPSY). Phosphoserine is present on residues S577, S589, S590, S637, and S673. The disordered stretch occupies residues 673–692 (SQPSVFTERTQREGPEEAEG). Residues 681–692 (RTQREGPEEAEG) are compositionally biased toward basic and acidic residues. Residues S710 and S711 each carry the phosphoserine modification. 2 disordered regions span residues 711 to 745 (SEEE…DPPG) and 769 to 806 (KRMM…TSGR). The span at 712-722 (EEEEDEDFEEE) shows a compositional bias: acidic residues. The span at 796 to 805 (MSESDLTTSG) shows a compositional bias: polar residues. A phosphoserine mark is found at S797, S799, and S804. A Tyrosine-protein phosphatase domain is found at 896–1167 (VFTEYERILK…TFVYRVLIQF (272 aa)). Substrate-binding positions include E1067, 1108-1114 (CSAGVGR), and Q1152. The active-site Phosphocysteine intermediate is the C1108.

Belongs to the protein-tyrosine phosphatase family. Non-receptor class subfamily.

The protein localises to the cytoplasm. The protein resides in the cytoskeleton. It catalyses the reaction O-phospho-L-tyrosyl-[protein] + H2O = L-tyrosyl-[protein] + phosphate. This Homo sapiens (Human) protein is Tyrosine-protein phosphatase non-receptor type 21 (PTPN21).